A 240-amino-acid polypeptide reads, in one-letter code: Nuclear receptor-interacting protein 3 (240 aa).

In Mus musculus (Mouse), this protein is Nuclear receptor-interacting protein 3 (Nrip3).